The following is a 1428-amino-acid chain: DNA polymerase III PolC-type (1428 aa).

One can recognise an Exonuclease domain in the interval 414-570 (FVVFDVETTG…YDAEATGYLL (157 aa)).

This sequence belongs to the DNA polymerase type-C family. PolC subfamily.

The protein resides in the cytoplasm. The enzyme catalyses DNA(n) + a 2'-deoxyribonucleoside 5'-triphosphate = DNA(n+1) + diphosphate. In terms of biological role, required for replicative DNA synthesis. This DNA polymerase also exhibits 3' to 5' exonuclease activity. The sequence is that of DNA polymerase III PolC-type from Oceanobacillus iheyensis (strain DSM 14371 / CIP 107618 / JCM 11309 / KCTC 3954 / HTE831).